Here is a 344-residue protein sequence, read N- to C-terminus: UDP-3-O-acylglucosamine N-acyltransferase (344 aa).

His-236 functions as the Proton acceptor in the catalytic mechanism.

It belongs to the transferase hexapeptide repeat family. LpxD subfamily. As to quaternary structure, homotrimer.

The catalysed reaction is a UDP-3-O-[(3R)-3-hydroxyacyl]-alpha-D-glucosamine + a (3R)-hydroxyacyl-[ACP] = a UDP-2-N,3-O-bis[(3R)-3-hydroxyacyl]-alpha-D-glucosamine + holo-[ACP] + H(+). It functions in the pathway bacterial outer membrane biogenesis; LPS lipid A biosynthesis. Catalyzes the N-acylation of UDP-3-O-acylglucosamine using 3-hydroxyacyl-ACP as the acyl donor. Is involved in the biosynthesis of lipid A, a phosphorylated glycolipid that anchors the lipopolysaccharide to the outer membrane of the cell. This is UDP-3-O-acylglucosamine N-acyltransferase from Nitratidesulfovibrio vulgaris (strain ATCC 29579 / DSM 644 / CCUG 34227 / NCIMB 8303 / VKM B-1760 / Hildenborough) (Desulfovibrio vulgaris).